The sequence spans 252 residues: Indole-3-glycerol phosphate synthase (252 aa).

The protein belongs to the TrpC family.

The catalysed reaction is 1-(2-carboxyphenylamino)-1-deoxy-D-ribulose 5-phosphate + H(+) = (1S,2R)-1-C-(indol-3-yl)glycerol 3-phosphate + CO2 + H2O. Its pathway is amino-acid biosynthesis; L-tryptophan biosynthesis; L-tryptophan from chorismate: step 4/5. The sequence is that of Indole-3-glycerol phosphate synthase from Listeria monocytogenes serotype 4b (strain CLIP80459).